Here is a 571-residue protein sequence, read N- to C-terminus: Penicillin-binding protein activator LpoA (571 aa).

The first 26 residues, 1-26 (MMTILLQHTHLKNRLMPFLLALFLAG), serve as a signal peptide directing secretion. C27 carries the N-palmitoyl cysteine lipid modification. C27 is lipidated: S-diacylglycerol cysteine.

Belongs to the LpoA family. In terms of assembly, interacts with PBP1a.

It is found in the cell outer membrane. In terms of biological role, regulator of peptidoglycan synthesis that is essential for the function of penicillin-binding protein 1A (PBP1a). In Pasteurella multocida (strain Pm70), this protein is Penicillin-binding protein activator LpoA.